Reading from the N-terminus, the 433-residue chain is Enolase (433 aa).

Residue glutamine 167 participates in (2R)-2-phosphoglycerate binding. The Proton donor role is filled by glutamate 209. Mg(2+) is bound by residues aspartate 246, glutamate 291, and aspartate 318. 4 residues coordinate (2R)-2-phosphoglycerate: lysine 343, arginine 372, serine 373, and lysine 394. Lysine 343 functions as the Proton acceptor in the catalytic mechanism.

The protein belongs to the enolase family. As to quaternary structure, component of the RNA degradosome, a multiprotein complex involved in RNA processing and mRNA degradation. The cofactor is Mg(2+).

It localises to the cytoplasm. Its subcellular location is the secreted. The protein localises to the cell surface. The catalysed reaction is (2R)-2-phosphoglycerate = phosphoenolpyruvate + H2O. It functions in the pathway carbohydrate degradation; glycolysis; pyruvate from D-glyceraldehyde 3-phosphate: step 4/5. Its function is as follows. Catalyzes the reversible conversion of 2-phosphoglycerate (2-PG) into phosphoenolpyruvate (PEP). It is essential for the degradation of carbohydrates via glycolysis. This is Enolase from Edwardsiella ictaluri (strain 93-146).